The primary structure comprises 455 residues: Ribosomal protein uS12 methylthiotransferase RimO (455 aa).

The 114-residue stretch at 1–114 (MKYHIVTLGC…INALVGQLER (114 aa)) folds into the MTTase N-terminal domain. [4Fe-4S] cluster is bound by residues Cys10, Cys46, Cys78, Cys166, Cys170, and Cys173. Positions 152–383 (THQTPSAYLK…MRLQQTISYT (232 aa)) constitute a Radical SAM core domain. Residues 386–455 (QRWVGRTIKV…AYDLWGEALS (70 aa)) form the TRAM domain.

The protein belongs to the methylthiotransferase family. RimO subfamily. It depends on [4Fe-4S] cluster as a cofactor.

It is found in the cytoplasm. It catalyses the reaction L-aspartate(89)-[ribosomal protein uS12]-hydrogen + (sulfur carrier)-SH + AH2 + 2 S-adenosyl-L-methionine = 3-methylsulfanyl-L-aspartate(89)-[ribosomal protein uS12]-hydrogen + (sulfur carrier)-H + 5'-deoxyadenosine + L-methionine + A + S-adenosyl-L-homocysteine + 2 H(+). Catalyzes the methylthiolation of an aspartic acid residue of ribosomal protein uS12. The protein is Ribosomal protein uS12 methylthiotransferase RimO of Chloroflexus aurantiacus (strain ATCC 29366 / DSM 635 / J-10-fl).